Reading from the N-terminus, the 237-residue chain is MQLTEQQQDKLSKVQLEESWKRSLTSFLLSPYMDSLRDFLFQQKQAQKTIYPPSKQIFNALNITPLDHVKVVILGQDPYHGPNQANGLSFSVQRGVALPPSLRNIFHELHTDLGVPVSRHGDLTKWAEQGVLLLNSVLTVEAGQPTSHHKQGWEEFTDAVIDVLNEQREHIVFILWGAYAQRKGQRINREKHLVLTAAHPSPLAANRGGFFGCKVFSKTNQYLKQHGIEPIDWQLDA.

The active-site Proton acceptor is Asp-77.

This sequence belongs to the uracil-DNA glycosylase (UDG) superfamily. UNG family.

It localises to the cytoplasm. It carries out the reaction Hydrolyzes single-stranded DNA or mismatched double-stranded DNA and polynucleotides, releasing free uracil.. Its function is as follows. Excises uracil residues from the DNA which can arise as a result of misincorporation of dUMP residues by DNA polymerase or due to deamination of cytosine. This is Uracil-DNA glycosylase from Acinetobacter baumannii (strain SDF).